A 631-amino-acid polypeptide reads, in one-letter code: Alpha-dioxygenase 2 (631 aa).

The N-terminal stretch at 1–20 is a signal peptide; it reads MGFSPSSSWFLHPQLHHVVS. Residue His157 coordinates heme b. Residue Tyr378 is the Proton acceptor of the active site. His381 is a heme b binding site. The N-linked (GlcNAc...) asparagine glycan is linked to Asn583.

This sequence belongs to the peroxidase family. It depends on heme b as a cofactor. Expressed in seedlings (cotyledons, young leaves, and hypocotyls), flowers, siliques and old leaves.

Its function is as follows. Alpha-dioxygenase that catalyzes the primary oxygenation of fatty acids into oxylipins. May be involved in the senescence process. This is Alpha-dioxygenase 2 (DOX2) from Arabidopsis thaliana (Mouse-ear cress).